We begin with the raw amino-acid sequence, 219 residues long: Triosephosphate isomerase (219 aa).

6 to 8 (NYK) serves as a coordination point for substrate. H90 acts as the Electrophile in catalysis. The active-site Proton acceptor is E138. Residues I143, G178, and 199-200 (AS) each bind substrate.

The protein belongs to the triosephosphate isomerase family. In terms of assembly, homotetramer; dimer of dimers.

It is found in the cytoplasm. It carries out the reaction D-glyceraldehyde 3-phosphate = dihydroxyacetone phosphate. Its pathway is carbohydrate biosynthesis; gluconeogenesis. The protein operates within carbohydrate degradation; glycolysis; D-glyceraldehyde 3-phosphate from glycerone phosphate: step 1/1. Its function is as follows. Involved in the gluconeogenesis. Catalyzes stereospecifically the conversion of dihydroxyacetone phosphate (DHAP) to D-glyceraldehyde-3-phosphate (G3P). The sequence is that of Triosephosphate isomerase from Methanocaldococcus jannaschii (strain ATCC 43067 / DSM 2661 / JAL-1 / JCM 10045 / NBRC 100440) (Methanococcus jannaschii).